A 489-amino-acid chain; its full sequence is Blue-light-activated histidine kinase (489 aa).

One can recognise a PAS domain in the interval 19–93 (ATDPFRAAVE…AIKSAIAAEK (75 aa)). C69 is modified (S-4a-FMN cysteine). 2 PAC domains span residues 93 to 147 (KPID…ELEK) and 232 to 281 (YSIE…NKAL). Residues 259-341 (NPLVLGIVQD…LLKENWAGAT (83 aa)) are HWE histidine kinase domain. H288 is modified (phosphohistidine; by autocatalysis).

In terms of processing, FMN binds covalently to cysteine after exposure to blue light and this bond is spontaneously broken in the dark.

The catalysed reaction is ATP + protein L-histidine = ADP + protein N-phospho-L-histidine.. Its function is as follows. Photosensitive kinase that is involved in increased bacterial virulence upon exposure to light. Once ejected from an infected animal host, sunlight acts as an environmental signal that increases the virulence of the bacterium, preparing it for infection of the next host. This photoreceptor protein is directly related to the bacterium's survival and replication within host macrophages. The protein is Blue-light-activated histidine kinase of Brucella ovis (strain ATCC 25840 / 63/290 / NCTC 10512).